The following is a 143-amino-acid chain: Ribosome maturation factor RimP (143 aa).

This sequence belongs to the RimP family.

Its subcellular location is the cytoplasm. In terms of biological role, required for maturation of 30S ribosomal subunits. The polypeptide is Ribosome maturation factor RimP (Borrelia hermsii (strain HS1 / DAH)).